Here is a 274-residue protein sequence, read N- to C-terminus: Nitrogenase iron protein (274 aa).

ATP is bound at residue 8 to 15; it reads GKGGIGKS. C94 provides a ligand contact to [4Fe-4S] cluster. An ADP-ribosylarginine; by dinitrogenase reductase ADP-ribosyltransferase modification is found at R97. C131 lines the [4Fe-4S] cluster pocket.

The protein belongs to the NifH/BchL/ChlL family. As to quaternary structure, homodimer. Requires [4Fe-4S] cluster as cofactor. The reversible ADP-ribosylation of Arg-97 inactivates the nitrogenase reductase and regulates nitrogenase activity.

It catalyses the reaction N2 + 8 reduced [2Fe-2S]-[ferredoxin] + 16 ATP + 16 H2O = H2 + 8 oxidized [2Fe-2S]-[ferredoxin] + 2 NH4(+) + 16 ADP + 16 phosphate + 6 H(+). Its function is as follows. The key enzymatic reactions in nitrogen fixation are catalyzed by the nitrogenase complex, which has 2 components: the iron protein and the molybdenum-iron protein. In Chlorobaculum parvum (strain DSM 263 / NCIMB 8327) (Chlorobium vibrioforme subsp. thiosulfatophilum), this protein is Nitrogenase iron protein.